The sequence spans 389 residues: S-adenosylmethionine synthase (389 aa).

Position 15 (His15) interacts with ATP. Residue Asp17 coordinates Mg(2+). A K(+)-binding site is contributed by Glu43. Glu56 and Gln99 together coordinate L-methionine. The tract at residues 99-109 (QSPDIAQGVNE) is flexible loop. ATP-binding positions include 166–168 (DAK), 234–235 (RF), Asp243, 249–250 (RK), Ala266, and Lys270. L-methionine is bound at residue Asp243. Residue Lys274 participates in L-methionine binding.

It belongs to the AdoMet synthase family. Homotetramer; dimer of dimers. Mg(2+) serves as cofactor. It depends on K(+) as a cofactor.

The protein localises to the cytoplasm. The catalysed reaction is L-methionine + ATP + H2O = S-adenosyl-L-methionine + phosphate + diphosphate. Its pathway is amino-acid biosynthesis; S-adenosyl-L-methionine biosynthesis; S-adenosyl-L-methionine from L-methionine: step 1/1. Catalyzes the formation of S-adenosylmethionine (AdoMet) from methionine and ATP. The overall synthetic reaction is composed of two sequential steps, AdoMet formation and the subsequent tripolyphosphate hydrolysis which occurs prior to release of AdoMet from the enzyme. The polypeptide is S-adenosylmethionine synthase (Neisseria meningitidis serogroup C (strain 053442)).